The chain runs to 97 residues: Co-chaperonin GroES (97 aa).

This sequence belongs to the GroES chaperonin family. As to quaternary structure, heptamer of 7 subunits arranged in a ring. Interacts with the chaperonin GroEL.

The protein resides in the cytoplasm. Functionally, together with the chaperonin GroEL, plays an essential role in assisting protein folding. The GroEL-GroES system forms a nano-cage that allows encapsulation of the non-native substrate proteins and provides a physical environment optimized to promote and accelerate protein folding. GroES binds to the apical surface of the GroEL ring, thereby capping the opening of the GroEL channel. This is Co-chaperonin GroES from Klebsiella pneumoniae (strain 342).